The following is a 144-amino-acid chain: Prefoldin subunit alpha (144 aa).

Belongs to the prefoldin alpha subunit family. In terms of assembly, heterohexamer of two alpha and four beta subunits.

The protein resides in the cytoplasm. Its function is as follows. Molecular chaperone capable of stabilizing a range of proteins. Seems to fulfill an ATP-independent, HSP70-like function in archaeal de novo protein folding. In Methanococcus maripaludis (strain C7 / ATCC BAA-1331), this protein is Prefoldin subunit alpha.